Consider the following 148-residue polypeptide: Globin-3 (148 aa).

In terms of domain architecture, Globin spans 2–148 (TLTKHEQDIL…HVFPMMAAEI (147 aa)). Residue histidine 99 coordinates heme.

Belongs to the globin family. In terms of assembly, monomer.

In terms of biological role, oxygen binding protein. This chain is Globin-3, found in Paramphistomum epiclitum.